The sequence spans 159 residues: Transcriptional repressor NrdR (159 aa).

Residues cysteine 3–cysteine 34 fold into a zinc finger. Residues leucine 49–glutamate 139 enclose the ATP-cone domain.

Belongs to the NrdR family. Requires Zn(2+) as cofactor.

Negatively regulates transcription of bacterial ribonucleotide reductase nrd genes and operons by binding to NrdR-boxes. The sequence is that of Transcriptional repressor NrdR from Streptococcus agalactiae serotype Ia (strain ATCC 27591 / A909 / CDC SS700).